A 181-amino-acid polypeptide reads, in one-letter code: Adenine phosphoribosyltransferase (181 aa).

It belongs to the purine/pyrimidine phosphoribosyltransferase family. As to quaternary structure, homodimer.

The protein localises to the cytoplasm. It catalyses the reaction AMP + diphosphate = 5-phospho-alpha-D-ribose 1-diphosphate + adenine. It participates in purine metabolism; AMP biosynthesis via salvage pathway; AMP from adenine: step 1/1. Functionally, catalyzes a salvage reaction resulting in the formation of AMP, that is energically less costly than de novo synthesis. The protein is Adenine phosphoribosyltransferase of Methylobacterium radiotolerans (strain ATCC 27329 / DSM 1819 / JCM 2831 / NBRC 15690 / NCIMB 10815 / 0-1).